The primary structure comprises 212 residues: High frequency lysogenization protein HflD homolog (212 aa).

Belongs to the HflD family.

The protein resides in the cytoplasm. The protein localises to the cell inner membrane. The chain is High frequency lysogenization protein HflD homolog from Pectobacterium carotovorum subsp. carotovorum (strain PC1).